Consider the following 518-residue polypeptide: D-aminopeptidase (518 aa).

Ser62 functions as the Nucleophile in the catalytic mechanism. Lys65 serves as the catalytic Proton donor/acceptor. Residues 477–487 form an important for specificity region; the sequence is QRSMDAPSPGE. Asp481 contributes to the substrate binding site.

Belongs to the peptidase S12 family. Homodimer.

The enzyme catalyses Release of an N-terminal D-amino acid from a peptide, Xaa-|-Yaa-, in which Xaa is preferably D-Ala, D-Ser or D-Thr. D-amino acid amides and methyl esters also are hydrolyzed, as is glycine amide.. With respect to regulation, inhibited by beta-lactam compounds such as 6-aminopenicillic acid, 7-aminocephalosporanic acid, benzylpenicillin and ampicillin. Inhibited by p-chloromercuribenzoate. Functionally, hydrolyzes N-terminal residues in D-amino acid-containing peptides. This chain is D-aminopeptidase, found in Brucella ovis (strain ATCC 25840 / 63/290 / NCTC 10512).